Here is a 250-residue protein sequence, read N- to C-terminus: Ribosomal RNA small subunit methyltransferase J (250 aa).

S-adenosyl-L-methionine-binding positions include 101 to 102 (RD), 117 to 118 (ER), 153 to 154 (SS), and aspartate 171.

It belongs to the methyltransferase superfamily. RsmJ family.

It is found in the cytoplasm. It catalyses the reaction guanosine(1516) in 16S rRNA + S-adenosyl-L-methionine = N(2)-methylguanosine(1516) in 16S rRNA + S-adenosyl-L-homocysteine + H(+). Specifically methylates the guanosine in position 1516 of 16S rRNA. This Escherichia coli O81 (strain ED1a) protein is Ribosomal RNA small subunit methyltransferase J.